The chain runs to 131 residues: Glycine cleavage system H protein (131 aa).

One can recognise a Lipoyl-binding domain in the interval 24–106 (TLRVGITDYA…YGEGWLVDLQ (83 aa)). The residue at position 65 (Lys-65) is an N6-lipoyllysine.

The protein belongs to the GcvH family. In terms of assembly, the glycine cleavage system is composed of four proteins: P, T, L and H. It depends on (R)-lipoate as a cofactor.

Functionally, the glycine cleavage system catalyzes the degradation of glycine. The H protein shuttles the methylamine group of glycine from the P protein to the T protein. This chain is Glycine cleavage system H protein, found in Mycobacterium sp. (strain JLS).